Consider the following 218-residue polypeptide: Small ribosomal subunit protein uS3c (218 aa).

Positions 43–118 (IKNYVQKNMK…KLNISITRIE (76 aa)) constitute a KH type-2 domain.

It belongs to the universal ribosomal protein uS3 family. As to quaternary structure, part of the 30S ribosomal subunit.

The protein localises to the plastid. Its subcellular location is the chloroplast. This is Small ribosomal subunit protein uS3c (rps3) from Populus alba (White poplar).